Reading from the N-terminus, the 381-residue chain is Queuine tRNA-ribosyltransferase (381 aa).

The active-site Proton acceptor is Asp-96. Substrate contacts are provided by residues 96 to 100 (DSGGF), Asp-150, Gln-193, and Gly-220. Positions 251–257 (GVGSPDS) are RNA binding. Asp-270 serves as the catalytic Nucleophile. Positions 275–279 (TRIAR) are RNA binding; important for wobble base 34 recognition. Residues Cys-308, Cys-310, Cys-313, and His-339 each contribute to the Zn(2+) site.

The protein belongs to the queuine tRNA-ribosyltransferase family. In terms of assembly, homodimer. Within each dimer, one monomer is responsible for RNA recognition and catalysis, while the other monomer binds to the replacement base PreQ1. It depends on Zn(2+) as a cofactor.

It carries out the reaction 7-aminomethyl-7-carbaguanine + guanosine(34) in tRNA = 7-aminomethyl-7-carbaguanosine(34) in tRNA + guanine. It functions in the pathway tRNA modification; tRNA-queuosine biosynthesis. Catalyzes the base-exchange of a guanine (G) residue with the queuine precursor 7-aminomethyl-7-deazaguanine (PreQ1) at position 34 (anticodon wobble position) in tRNAs with GU(N) anticodons (tRNA-Asp, -Asn, -His and -Tyr). Catalysis occurs through a double-displacement mechanism. The nucleophile active site attacks the C1' of nucleotide 34 to detach the guanine base from the RNA, forming a covalent enzyme-RNA intermediate. The proton acceptor active site deprotonates the incoming PreQ1, allowing a nucleophilic attack on the C1' of the ribose to form the product. After dissociation, two additional enzymatic reactions on the tRNA convert PreQ1 to queuine (Q), resulting in the hypermodified nucleoside queuosine (7-(((4,5-cis-dihydroxy-2-cyclopenten-1-yl)amino)methyl)-7-deazaguanosine). The chain is Queuine tRNA-ribosyltransferase from Bacillus pumilus (strain SAFR-032).